Here is a 142-residue protein sequence, read N- to C-terminus: Hemoglobin subunit alpha (142 aa).

Residues 2 to 142 (VLSAADKTNV…VSTVLTSKYR (141 aa)) form the Globin domain. S4 carries the phosphoserine modification. Position 8 is an N6-succinyllysine (K8). Phosphothreonine is present on T9. Position 12 is an N6-succinyllysine (K12). K17 is modified (N6-acetyllysine; alternate). K17 carries the post-translational modification N6-succinyllysine; alternate. K41 carries the N6-succinyllysine modification. A Phosphoserine modification is found at S50. O2 is bound at residue H59. H88 lines the heme b pocket. S103 carries the phosphoserine modification. T109 is subject to Phosphothreonine. Phosphoserine is present on S125. Residues T135 and T138 each carry the phosphothreonine modification. The residue at position 139 (S139) is a Phosphoserine.

Belongs to the globin family. Heterotetramer of two alpha chains and two beta chains. As to expression, red blood cells.

Involved in oxygen transport from the lung to the various peripheral tissues. Its function is as follows. Hemopressin acts as an antagonist peptide of the cannabinoid receptor CNR1. Hemopressin-binding efficiently blocks cannabinoid receptor CNR1 and subsequent signaling. This is Hemoglobin subunit alpha (HBA) from Equus zebra (Mountain zebra).